The sequence spans 300 residues: Dihydroorotate dehydrogenase B (NAD(+)), catalytic subunit (300 aa).

FMN is bound by residues Ser21 and 45–46 (KG). Substrate contacts are provided by residues Lys45 and 69–73 (NSIGL). FMN is bound by residues Asn99 and Asn126. Asn126 contacts substrate. The active-site Nucleophile is the Cys129. Residues Lys164 and Val190 each coordinate FMN. 191 to 192 (NT) provides a ligand contact to substrate. FMN-binding positions include Gly216, 242–243 (GG), and 264–265 (GT).

This sequence belongs to the dihydroorotate dehydrogenase family. Type 1 subfamily. As to quaternary structure, heterotetramer of 2 PyrK and 2 PyrD type B subunits. It depends on FMN as a cofactor.

The protein resides in the cytoplasm. The enzyme catalyses (S)-dihydroorotate + NAD(+) = orotate + NADH + H(+). Its pathway is pyrimidine metabolism; UMP biosynthesis via de novo pathway; orotate from (S)-dihydroorotate (NAD(+) route): step 1/1. Functionally, catalyzes the conversion of dihydroorotate to orotate with NAD(+) as electron acceptor. The chain is Dihydroorotate dehydrogenase B (NAD(+)), catalytic subunit (pyrD) from Petrotoga mobilis (strain DSM 10674 / SJ95).